The primary structure comprises 340 residues: Coproporphyrin III ferrochelatase (340 aa).

Fe-coproporphyrin III-binding residues include S52 and Y116. Residues H172 and E255 each coordinate Fe(2+).

Belongs to the ferrochelatase family.

It is found in the cytoplasm. It carries out the reaction Fe-coproporphyrin III + 2 H(+) = coproporphyrin III + Fe(2+). The protein operates within porphyrin-containing compound metabolism; protoheme biosynthesis. Involved in coproporphyrin-dependent heme b biosynthesis. Catalyzes the insertion of ferrous iron into coproporphyrin III to form Fe-coproporphyrin III. The polypeptide is Coproporphyrin III ferrochelatase (Mycobacterium ulcerans (strain Agy99)).